Reading from the N-terminus, the 469-residue chain is MARGLGAPHWVAVGLLTWATLGLLVAELGGHDDLHDDLQEDFHGHSHRHSHEDFHHGHSHAHGHGHTHESIWHGHTHGHDHGHSHGDLHHGHSHGHSHESLYHRGHGHDNEHSRGGYGESGAPGIKQDLDAVTLWAYALGATVLISAAPFFVLFLIPVESNSPRHRSLLQILLSFASGGLLGDAFLHLIPHALEPHSHHTLEQPGHGHSHSGQGPILSVGLWVLSGIVAFLVVEKFVRHVKGGHGHSHGHGHAHSHTHGSHGHGRQECSTKEKQSSEEEEKETRGVQKRRGGSTVPKDGPVRPQNAEEEKRGLDLRVSGYLNLAADLAHNFTDGLAIGASFRGGRGLGILTTMTVLLHEVPHEVGDFAILVQSGCSKKQAMRLQLLTAVGALAGTACALLTEGGAVGSEIAGGAGPGWVLPFTAGGFIYVATVSVLPELLREASPLQSLLEVLGLLGGVVMMVLIAHLE.

The chain crosses the membrane as a helical span at residues tryptophan 10–glycine 30. Basic and acidic residues-rich tracts occupy residues phenylalanine 42–histidine 56 and histidine 66–arginine 114. The interval phenylalanine 42–glycine 121 is disordered. Histidine 66 is modified (pros-methylhistidine). Transmembrane regions (helical) follow at residues alanine 138 to valine 158, leucine 169 to isoleucine 189, and glycine 214 to glutamate 234. The segment covering glycine 242–histidine 263 has biased composition (basic residues). A disordered region spans residues glycine 242 to lysine 310. The segment covering glycine 264–glycine 285 has biased composition (basic and acidic residues). Phosphoserine is present on residues serine 275 and serine 276. Helical transmembrane passes span leucine 386–valine 406, isoleucine 410–valine 430, and serine 448–leucine 468.

It belongs to the ZIP transporter (TC 2.A.5) family. KE4/Catsup subfamily. Homodimer. Post-translationally, methylation at some His residue by METTL9 leads to reduced zinc-binding. In terms of processing, rapidly phosphorylated by CK2 following Zn(2+) treatment. This phosphorylation is required for efficient cytosolic Zn(2+) release.

The protein resides in the endoplasmic reticulum membrane. Its subcellular location is the golgi apparatus. It localises to the cis-Golgi network membrane. The enzyme catalyses Zn(2+)(in) = Zn(2+)(out). Functionally, transports Zn(2+) from the endoplasmic reticulum (ER)/Golgi apparatus to the cytosol, playing an essential role in the regulation of cytosolic zinc levels. Acts as a gatekeeper of zinc release from intracellular stores, requiring post-translational activation by phosphorylation, resulting in activation of multiple downstream pathways leading to cell growth and proliferation. Has an essential role in B cell development and is required for proper B cell receptor signaling. Plays an important role in maintaining intestinal epithelial homeostasis and skin dermis development by regulating ER function. Controls cell signaling pathways involved in glucose metabolism in skeletal muscle. Has a protective role against ER stress in different biological contexts. Mediates Zn(2+)-induced ferroptosis. In Pongo abelii (Sumatran orangutan), this protein is Zinc transporter SLC39A7.